The chain runs to 257 residues: Deoxyribose-phosphate aldolase (257 aa).

Asp102 acts as the Proton donor/acceptor in catalysis. Lys166 serves as the catalytic Schiff-base intermediate with acetaldehyde. Catalysis depends on Lys198, which acts as the Proton donor/acceptor.

Belongs to the DeoC/FbaB aldolase family. DeoC type 2 subfamily.

Its subcellular location is the cytoplasm. The enzyme catalyses 2-deoxy-D-ribose 5-phosphate = D-glyceraldehyde 3-phosphate + acetaldehyde. The protein operates within carbohydrate degradation; 2-deoxy-D-ribose 1-phosphate degradation; D-glyceraldehyde 3-phosphate and acetaldehyde from 2-deoxy-alpha-D-ribose 1-phosphate: step 2/2. In terms of biological role, catalyzes a reversible aldol reaction between acetaldehyde and D-glyceraldehyde 3-phosphate to generate 2-deoxy-D-ribose 5-phosphate. The sequence is that of Deoxyribose-phosphate aldolase from Shewanella frigidimarina (strain NCIMB 400).